We begin with the raw amino-acid sequence, 247 residues long: Serine protease 1 (247 aa).

Positions 1-15 are cleaved as a signal peptide; sequence MNPLLILTFVAAALA. Residues 16 to 23 constitute a propeptide, activation peptide; the sequence is APFDDDDK. The 221-residue stretch at 24-244 folds into the Peptidase S1 domain; sequence IVGGYNCEEN…YVKWIKNTIA (221 aa). Cystine bridges form between Cys-30–Cys-160, Cys-48–Cys-64, Cys-139–Cys-206, Cys-171–Cys-185, and Cys-196–Cys-220. His-63 serves as the catalytic Charge relay system. Ca(2+) contacts are provided by Glu-75, Asn-77, Val-80, and Glu-85. Residue Asp-107 is the Charge relay system of the active site. Tyr-154 carries the sulfotyrosine modification. The Charge relay system role is filled by Ser-200.

It belongs to the peptidase S1 family. Interacts with SERPINA1. Ca(2+) is required as a cofactor. In terms of processing, occurs in a single-chain form and a two-chain form, produced by proteolytic cleavage after Arg-122. Post-translationally, sulfation at Tyr-154 increases selectivity towards basic versus apolar residues at the P2' position of inhibitors that bind in a substrate-like fashion. Although the increase in selectivity is relatively small, it may facilitate digestion of a broader range of dietary proteins.

Its subcellular location is the secreted. The protein resides in the extracellular space. The enzyme catalyses Preferential cleavage: Arg-|-Xaa, Lys-|-Xaa.. In terms of biological role, has activity against the synthetic substrates Boc-Phe-Ser-Arg-Mec, Boc-Leu-Thr-Arg-Mec, Boc-Gln-Ala-Arg-Mec and Boc-Val-Pro-Arg-Mec. The single-chain form is more active than the two-chain form against all of these substrates. This chain is Serine protease 1, found in Homo sapiens (Human).